The primary structure comprises 521 residues: Glucomannan 4-beta-mannosyltransferase 1 (521 aa).

Residues 22–42 (VIVPLLRLAVAVCLTMSVLLF) form a helical membrane-spanning segment. The active site involves aspartate 123. Substrate contacts are provided by aspartate 182 and aspartate 184. The active site involves aspartate 276. 4 helical membrane-spanning segments follow: residues 355 to 375 (IIAH…TIFV), 391 to 411 (IITL…FFWI), 471 to 491 (VTEL…LAFG), and 495 to 515 (FFIY…GYVG).

This sequence belongs to the glycosyltransferase 2 family. Plant cellulose synthase-like A subfamily.

It is found in the golgi apparatus membrane. The enzyme catalyses GDP-mannose + (glucomannan)n = GDP + (glucomannan)n+1.. Functionally, possesses glucomannan synthase and mannan synthase activities in vitro. Mannan synthase consists of a 4-beta-mannosyltransferase activity on mannan using GDP-mannose. The beta-1,4-mannan product is the backbone for galactomannan synthesis by galactomannan galactosyltransferase. Galactomannan is a noncellulosic polysaccharides of plant cell wall. This chain is Glucomannan 4-beta-mannosyltransferase 1, found in Oryza sativa subsp. japonica (Rice).